The chain runs to 506 residues: Cobyric acid synthase (506 aa).

One can recognise a GATase cobBQ-type domain in the interval 251–448; the sequence is DIDIAVVQVP…LHGLFDSDAF (198 aa). Residue Cys-332 is the Nucleophile of the active site. His-440 is a catalytic residue.

This sequence belongs to the CobB/CobQ family. CobQ subfamily.

The protein operates within cofactor biosynthesis; adenosylcobalamin biosynthesis. In terms of biological role, catalyzes amidations at positions B, D, E, and G on adenosylcobyrinic A,C-diamide. NH(2) groups are provided by glutamine, and one molecule of ATP is hydrogenolyzed for each amidation. The sequence is that of Cobyric acid synthase from Citrobacter koseri (strain ATCC BAA-895 / CDC 4225-83 / SGSC4696).